We begin with the raw amino-acid sequence, 24 residues long: EPAIYFKEQFLDGXGFTDXRIKEK.

The protein belongs to the calreticulin family. Monomer. Component of an EIF2 complex at least composed of CELF1/CUGBP1, CALR, CALR3, EIF2S1, EIF2S2, HSP90B1 and HSPA5. Interacts with PDIA3/ERp57 and SPACA9. Interacts with TRIM21. Interacts with NR3C1. Interacts with PPIB. Interacts (via P-domain) with PDIA5. Interacts with CLCC1. Pancreas.

It localises to the endoplasmic reticulum lumen. The protein resides in the cytoplasm. It is found in the cytosol. The protein localises to the cytolytic granule. Its subcellular location is the secreted. It localises to the extracellular space. The protein resides in the extracellular matrix. It is found in the cell surface. The protein localises to the sarcoplasmic reticulum lumen. Its subcellular location is the cytoplasmic vesicle. It localises to the secretory vesicle. The protein resides in the cortical granule. In terms of biological role, calcium-binding chaperone that promotes folding, oligomeric assembly and quality control in the endoplasmic reticulum (ER) via the calreticulin/calnexin cycle. This lectin interacts transiently with almost all of the monoglucosylated glycoproteins that are synthesized in the ER. Interacts with the DNA-binding domain of NR3C1 and mediates its nuclear export. Involved in maternal gene expression regulation. May participate in oocyte maturation via the regulation of calcium homeostasis. Present in the cortical granules of non-activated oocytes, is exocytosed during the cortical reaction in response to oocyte activation and might participate in the block to polyspermy. This is Calreticulin (CALR) from Canis lupus familiaris (Dog).